The primary structure comprises 699 residues: Dymeclin (699 aa).

The N-myristoyl glycine moiety is linked to residue G2. Residue S346 is modified to Phosphoserine.

It belongs to the dymeclin family.

The sequence is that of Dymeclin from Drosophila melanogaster (Fruit fly).